Reading from the N-terminus, the 457-residue chain is Pup--protein ligase (457 aa).

Glutamate 9 contributes to the Mg(2+) binding site. Arginine 53 serves as a coordination point for ATP. Mg(2+) is bound at residue tyrosine 55. Aspartate 57 (proton acceptor) is an active-site residue. Glutamate 63 serves as a coordination point for Mg(2+). Threonine 66 and tryptophan 424 together coordinate ATP.

Belongs to the Pup ligase/Pup deamidase family. Pup-conjugating enzyme subfamily.

The enzyme catalyses ATP + [prokaryotic ubiquitin-like protein]-L-glutamate + [protein]-L-lysine = ADP + phosphate + N(6)-([prokaryotic ubiquitin-like protein]-gamma-L-glutamyl)-[protein]-L-lysine.. It participates in protein degradation; proteasomal Pup-dependent pathway. The protein operates within protein modification; protein pupylation. In terms of biological role, catalyzes the covalent attachment of the prokaryotic ubiquitin-like protein modifier Pup to the proteasomal substrate proteins, thereby targeting them for proteasomal degradation. This tagging system is termed pupylation. The ligation reaction involves the side-chain carboxylate of the C-terminal glutamate of Pup and the side-chain amino group of a substrate lysine. The sequence is that of Pup--protein ligase from Xylanimonas cellulosilytica (strain DSM 15894 / JCM 12276 / CECT 5975 / KCTC 9989 / LMG 20990 / NBRC 107835 / XIL07).